A 256-amino-acid chain; its full sequence is MNNIWWQTKGQGNVHLVLLHGWGLNAEVWRCIDEELSSHFTLHLVDLPGFGRSRGFGALSLADMAEAVLRQAPDKAIWLGWSLGGLVASQIALTHPERVQALVTVASSPCFSARDEWPGIKPDVLAGFQQQLSDDFQRTVERFLALQTMGTETARQDARALKKTVLALPMPEVDVLNGGLEILKTVDLRQPLQNVSMPFLRLYGYLDGLVPRKVVPMLDKLWPHSESYIFAKAAHAPFISHPAEFCRMLVALKQRV.

The 228-residue stretch at 15-242 (HLVLLHGWGL…AAHAPFISHP (228 aa)) folds into the AB hydrolase-1 domain. Substrate-binding positions include Trp22, 82–83 (SL), and 143–147 (FLALQ). The active-site Nucleophile is Ser82. Catalysis depends on residues Asp207 and His235. A substrate-binding site is contributed by His235.

It belongs to the AB hydrolase superfamily. Carboxylesterase BioH family. As to quaternary structure, monomer.

The protein resides in the cytoplasm. The enzyme catalyses 6-carboxyhexanoyl-[ACP] methyl ester + H2O = 6-carboxyhexanoyl-[ACP] + methanol + H(+). It participates in cofactor biosynthesis; biotin biosynthesis. In terms of biological role, the physiological role of BioH is to remove the methyl group introduced by BioC when the pimeloyl moiety is complete. It allows to synthesize pimeloyl-ACP via the fatty acid synthetic pathway through the hydrolysis of the ester bonds of pimeloyl-ACP esters. This is Pimeloyl-[acyl-carrier protein] methyl ester esterase from Escherichia coli O17:K52:H18 (strain UMN026 / ExPEC).